The primary structure comprises 218 residues: Pyridoxine/pyridoxamine 5'-phosphate oxidase (218 aa).

Residues 14–17 (RREY) and Lys-72 contribute to the substrate site. FMN is bound by residues 67–72 (RIVLLK), 82–83 (YT), Arg-88, Lys-89, and Gln-111. 3 residues coordinate substrate: Tyr-129, Arg-133, and Ser-137. Residues 146-147 (QS) and Trp-191 contribute to the FMN site. A substrate-binding site is contributed by 197 to 199 (RLH). Arg-201 serves as a coordination point for FMN.

The protein belongs to the pyridoxamine 5'-phosphate oxidase family. As to quaternary structure, homodimer. The cofactor is FMN.

The enzyme catalyses pyridoxamine 5'-phosphate + O2 + H2O = pyridoxal 5'-phosphate + H2O2 + NH4(+). It catalyses the reaction pyridoxine 5'-phosphate + O2 = pyridoxal 5'-phosphate + H2O2. Its pathway is cofactor metabolism; pyridoxal 5'-phosphate salvage; pyridoxal 5'-phosphate from pyridoxamine 5'-phosphate: step 1/1. It participates in cofactor metabolism; pyridoxal 5'-phosphate salvage; pyridoxal 5'-phosphate from pyridoxine 5'-phosphate: step 1/1. Functionally, catalyzes the oxidation of either pyridoxine 5'-phosphate (PNP) or pyridoxamine 5'-phosphate (PMP) into pyridoxal 5'-phosphate (PLP). This is Pyridoxine/pyridoxamine 5'-phosphate oxidase from Escherichia coli O127:H6 (strain E2348/69 / EPEC).